Consider the following 225-residue polypeptide: MKKAVILVSGGADSATVLAIMREQGYEIHAISFNYGQRNNAELRKVTELVKEYNVKQHKIVNIDLRAFGGSALTDDDIKVPHYHDTKELPEDVPVTYVPARNTIFLSYALGFAEIIGAKDIFIGVHTSDSANYPDCRPEYIKSFEAMANLATNIGGVTIHTPLINMTKDQIIKTGLRLGVDYKNTISCYDPSEDDLSCGTCLACTIRLDAFKKNNVQDPINYILF.

8–18 (VSGGADSATVL) lines the ATP pocket. Residues Cys-188, Cys-198, Cys-201, and Cys-204 each coordinate Zn(2+).

It belongs to the QueC family. It depends on Zn(2+) as a cofactor.

The catalysed reaction is 7-carboxy-7-deazaguanine + NH4(+) + ATP = 7-cyano-7-deazaguanine + ADP + phosphate + H2O + H(+). It participates in purine metabolism; 7-cyano-7-deazaguanine biosynthesis. Its function is as follows. Catalyzes the ATP-dependent conversion of 7-carboxy-7-deazaguanine (CDG) to 7-cyano-7-deazaguanine (preQ(0)). This chain is 7-cyano-7-deazaguanine synthase, found in Rickettsia bellii (strain OSU 85-389).